The chain runs to 462 residues: MQLRKMQSIKKEQASLDAGTNVDKMMVLNSALTEVSEDLTTGEELLLNEGSVGKNKSSACRRKREFIPDEKKDAMYWEKRRKNNEAAKRSREKRRLNDLVLENKLIALGEENATLKAELLSLKLKFGLISSTAYAQEIQKLSNSTAVYFQDYQTSKSTVSAFVDEHEPSMVASSCISVIKHSPQSSLSDVSEVSSLEHSQEGPVQNGCRSPESKFQVIKQEPMELESYAREPRDDRGAYRGAVYQNYMGNSFPGYSHSPPLLQVNRSSSNSPRTSETDEGAVGKSSDGEDEQQVPKGPIHSPVELQRVHATVVKVPEVNSSALPHKLRIKAKAMQIKVEAFDHEFDGTQKLSSPVDMTSKRHFELEKHTTPNLVHSSLTPFSVQVTNIQDWSLKSEHWHQKELNGKTQSSFKTGVVEVKDSGYKVSDPENLFLKQGIANLSAEVVSLKRLIATHQISASDSG.

Lysine 24 is covalently cross-linked (Glycyl lysine isopeptide (Lys-Gly) (interchain with G-Cter in SUMO2)). The 64-residue stretch at 73–136 folds into the bZIP domain; sequence DAMYWEKRRK…GLISSTAYAQ (64 aa). The basic motif stretch occupies residues 79 to 95; sequence KRRKNNEAAKRSREKRR. The tract at residues 99 to 106 is leucine-zipper; that stretch reads LVLENKLI. 2 disordered regions span residues 189 to 236 and 254 to 303; these read DVSE…RDDR and GYSH…HSPV. Lysine 214 participates in a covalent cross-link: Glycyl lysine isopeptide (Lys-Gly) (interchain with G-Cter in SUMO2). Lysine 219 participates in a covalent cross-link: Glycyl lysine isopeptide (Lys-Gly) (interchain with G-Cter in SUMO1); alternate. A Glycyl lysine isopeptide (Lys-Gly) (interchain with G-Cter in SUMO2); alternate cross-link involves residue lysine 219. Residues 227-236 are compositionally biased toward basic and acidic residues; it reads SYAREPRDDR. Positions 264–274 are enriched in polar residues; it reads VNRSSSNSPRT. Serine 301 carries the post-translational modification Phosphoserine. Glycyl lysine isopeptide (Lys-Gly) (interchain with G-Cter in SUMO2) cross-links involve residues lysine 314, lysine 326, lysine 332, lysine 337, and lysine 350. Serine 353 carries the phosphoserine modification. Glycyl lysine isopeptide (Lys-Gly) (interchain with G-Cter in SUMO2) cross-links involve residues lysine 360, lysine 394, lysine 401, lysine 406, lysine 412, lysine 419, lysine 424, lysine 434, and lysine 448.

Belongs to the bZIP family. NFIL3 subfamily. In terms of assembly, homodimer. Binds DNA as a dimer. Interacts with CRY2, DR1 and PER2. Interacts with NR0B2. Interacts with MYSM1.

Its subcellular location is the nucleus. Functionally, acts as a transcriptional regulator that recognizes and binds to the sequence 5'-[GA]TTA[CT]GTAA[CT]-3', a sequence present in many cellular and viral promoters. Represses transcription from promoters with activating transcription factor (ATF) sites. Represses promoter activity in osteoblasts. Represses transcriptional activity of PER1. Represses transcriptional activity of PER2 via the B-site on the promoter. Activates transcription from the interleukin-3 promoter in T-cells. Competes for the same consensus-binding site with PAR DNA-binding factors (DBP, HLF and TEF). Component of the circadian clock that acts as a negative regulator for the circadian expression of PER2 oscillation in the cell-autonomous core clock. Protects pro-B cells from programmed cell death. Represses the transcription of CYP2A5. Positively regulates the expression and activity of CES2 by antagonizing the repressive action of NR1D1 on CES2. Required for the development of natural killer cell precursors. The protein is Nuclear factor interleukin-3-regulated protein (NFIL3) of Bos taurus (Bovine).